We begin with the raw amino-acid sequence, 325 residues long: Tetraacyldisaccharide 4'-kinase (325 aa).

Residue 54–61 (SVGGTGKT) participates in ATP binding.

It belongs to the LpxK family.

It carries out the reaction a lipid A disaccharide + ATP = a lipid IVA + ADP + H(+). It functions in the pathway glycolipid biosynthesis; lipid IV(A) biosynthesis; lipid IV(A) from (3R)-3-hydroxytetradecanoyl-[acyl-carrier-protein] and UDP-N-acetyl-alpha-D-glucosamine: step 6/6. Functionally, transfers the gamma-phosphate of ATP to the 4'-position of a tetraacyldisaccharide 1-phosphate intermediate (termed DS-1-P) to form tetraacyldisaccharide 1,4'-bis-phosphate (lipid IVA). The chain is Tetraacyldisaccharide 4'-kinase from Rickettsia akari (strain Hartford).